A 206-amino-acid polypeptide reads, in one-letter code: Undecaprenyl-diphosphatase (206 aa).

The next 5 helical transmembrane spans lie at 5–25 (YYWILLLLFLILSIYIKLIGG), 53–73 (FLSKYGREYVWIPVTALLLIF), 79–99 (IGITLVISFVIAIVLGEVSKY), 138–158 (VTLLLTSPKWMWILGIIEAVL), and 164–184 (VYVGVHWPLDVIAGWLLGSWI).

Its subcellular location is the cell membrane. It carries out the reaction di-trans,octa-cis-undecaprenyl diphosphate + H2O = di-trans,octa-cis-undecaprenyl phosphate + phosphate + H(+). This chain is Undecaprenyl-diphosphatase (sepP), found in Sulfolobus acidocaldarius (strain ATCC 33909 / DSM 639 / JCM 8929 / NBRC 15157 / NCIMB 11770).